Consider the following 323-residue polypeptide: Arginase-1 (323 aa).

A disordered region spans residues 1 to 27 (MSSKPKPIEIIGAPFSKGQPRGGVEKG). The residue at position 17 (lysine 17) is an N6-succinyllysine. A phosphoserine mark is found at serine 62 and serine 72. Lysine 75 bears the N6-succinyllysine mark. The Mn(2+) site is built by histidine 101, aspartate 124, histidine 126, and aspartate 128. Residues 126-130 (HTDIN) and 137-139 (SGN) each bind substrate. Residue serine 163 is modified to Phosphoserine. Residue aspartate 183 coordinates substrate. At serine 217 the chain carries Phosphoserine. Mn(2+) contacts are provided by aspartate 232 and aspartate 234. 2 residues coordinate substrate: threonine 246 and glutamate 277. Threonine 281 carries the post-translational modification Phosphothreonine.

It belongs to the arginase family. In terms of assembly, homotrimer. Interacts with CMTM6. It depends on Mn(2+) as a cofactor. As to expression, detected in liver (at protein level).

It is found in the cytoplasm. It localises to the cytoplasmic granule. The enzyme catalyses L-arginine + H2O = urea + L-ornithine. It participates in nitrogen metabolism; urea cycle; L-ornithine and urea from L-arginine: step 1/1. Its activity is regulated as follows. Inactivated by diethyl pyrocarbonate (DEPC). In terms of biological role, key element of the urea cycle converting L-arginine to urea and L-ornithine, which is further metabolized into metabolites proline and polyamides that drive collagen synthesis and bioenergetic pathways critical for cell proliferation, respectively; the urea cycle takes place primarily in the liver and, to a lesser extent, in the kidneys. Functionally, functions in L-arginine homeostasis in nonhepatic tissues characterized by the competition between nitric oxide synthase (NOS) and arginase for the available intracellular substrate arginine. Arginine metabolism is a critical regulator of innate and adaptive immune responses. Involved in an antimicrobial effector pathway in polymorphonuclear granulocytes (PMN). Upon PMN cell death is liberated from the phagolysosome and depletes arginine in the microenvironment leading to suppressed T cell and natural killer (NK) cell proliferation and cytokine secretion. In group 2 innate lymphoid cells (ILC2s) promotes acute type 2 inflammation in the lung and is involved in optimal ILC2 proliferation but not survival. Plays a role in the immune response of alternatively activated or M2 macrophages in processes such as wound healing and tissue regeneration, immune defense against multicellular pathogens and parasites, and immune suppression and allergic inflammation; the regulatory outcome seems to be organ specific. In tumor-infiltrating dendritic cells (DCs) and myeloid-derived suppressor cells (MDSCs) plays a role in suppression of T cell-mediated antitumor immunity. This is Arginase-1 (Arg1) from Rattus norvegicus (Rat).